A 243-amino-acid chain; its full sequence is Orotidine 5'-phosphate decarboxylase (243 aa).

Residues D19, K41, 69-78 (DLKFFDIPAT), T124, R185, Q194, G214, and R215 each bind substrate. The Proton donor role is filled by K71.

Belongs to the OMP decarboxylase family. Type 1 subfamily. As to quaternary structure, homodimer.

The enzyme catalyses orotidine 5'-phosphate + H(+) = UMP + CO2. It participates in pyrimidine metabolism; UMP biosynthesis via de novo pathway; UMP from orotate: step 2/2. Catalyzes the decarboxylation of orotidine 5'-monophosphate (OMP) to uridine 5'-monophosphate (UMP). The protein is Orotidine 5'-phosphate decarboxylase of Xanthomonas euvesicatoria pv. vesicatoria (strain 85-10) (Xanthomonas campestris pv. vesicatoria).